The following is an 83-amino-acid chain: Small ribosomal subunit protein bS16 (83 aa).

This sequence belongs to the bacterial ribosomal protein bS16 family.

This Thermosynechococcus vestitus (strain NIES-2133 / IAM M-273 / BP-1) protein is Small ribosomal subunit protein bS16.